The chain runs to 521 residues: Acetylcholine receptor subunit delta (521 aa).

The first 21 residues, 1–21 (MAWIWISLLLPILIYFPGCFS), serve as a signal peptide directing secretion. At 22–247 (ESEEERLLNH…ITFYLIIERK (226 aa)) the chain is on the extracellular side. Asparagine 53 and asparagine 164 each carry an N-linked (GlcNAc...) asparagine glycan. Cysteines 151 and 165 form a disulfide. 3 consecutive transmembrane segments (helical) span residues 248–272 (PLFY…VFYL), 280–297 (MTLA…LLLI), and 314–335 (YLMF…VLNL). The Cytoplasmic segment spans residues 336-475 (HFRTPSTHAI…WYRIARTVDR (140 aa)). Tyrosine 394 carries the post-translational modification Phosphotyrosine; by Tyr-kinases. A helical transmembrane segment spans residues 476–494 (LCLFLVTPVMIIGTLWIFL).

This sequence belongs to the ligand-gated ion channel (TC 1.A.9) family. Acetylcholine receptor (TC 1.A.9.1) subfamily. In terms of assembly, pentamer of two alpha chains, and one each of the beta, delta, and gamma (in immature muscle) or epsilon (in mature muscle) chains.

Its subcellular location is the postsynaptic cell membrane. It is found in the cell membrane. The catalysed reaction is K(+)(in) = K(+)(out). It catalyses the reaction Na(+)(in) = Na(+)(out). After binding acetylcholine, the AChR responds by an extensive change in conformation that affects all subunits and leads to opening of an ion-conducting channel across the plasma membrane. The sequence is that of Acetylcholine receptor subunit delta (chrnd) from Xenopus laevis (African clawed frog).